The sequence spans 86 residues: Neurotoxin 8-related gene product 1/2/3 (86 aa).

Residues 1–19 (MNYLTMISLALLVMTGVES) form the signal peptide. The region spanning 22–84 (RDAYIADNKN…VPIKVPGKCN (63 aa)) is the LCN-type CS-alpha/beta domain. 4 cysteine pairs are disulfide-bonded: Cys32–Cys83, Cys36–Cys56, Cys42–Cys66, and Cys46–Cys68. Position 84 is an asparagine amide (Asn84).

Belongs to the long (4 C-C) scorpion toxin superfamily. Sodium channel inhibitor family. Alpha subfamily. Expressed by the venom gland.

Its subcellular location is the secreted. In terms of biological role, binds voltage-dependently at site-3 of sodium channels (Nav) and inhibits the inactivation of the activated channels, thereby blocking neuronal transmission. The sequence is that of Neurotoxin 8-related gene product 1/2/3 (NTVIIIrgp1) from Androctonus mauritanicus mauritanicus (Scorpion).